The sequence spans 453 residues: MGGEEGMAAGRKKRVGRYEVGRTIGQGTFAKVKFAVDADTGAAVAMKVLDKDTILNHRMLHQIKREISIMKIVRHPNIVRLNEVLAGKTKIYIILELITGGELFDKIARQGKLRENEARKYFQQLIDAINYCHSKGVYHRDLKPENLLLDSRGNLKVSDFGLSTLAQKGVGLLHTTCGTPNYVAPEVLSNNGYDGSAADVWSCGVILYVLMAGYLPFEEDDLPTLYDKITAGQFSCPYWFSPGATSLIHRILDPNPKTRITIEQIREDTWFKKTYVAIKRGEDENVDLDDVQAVFDNIEDKYVSEQVTHNDGGPLVMNAFEMITLSQGLDLSALFDRQQEFVKRQTRFVSRKPAKTIVATIEVVAETMGLKVHSQNYKLRLEGVSSNRMSPFAVVLQVFEVAPSLFMVDVRKVAGDTLEYHRFYKNLCNKMESIIWRPIEVSAKSALLRTATC.

The region spanning 18–271 (YEVGRTIGQG…IEQIREDTWF (254 aa)) is the Protein kinase domain. Residues 24-32 (IGQGTFAKV) and Lys47 each bind ATP. The active-site Proton acceptor is the Asp141. Residues 159-186 (DFGLSTLAQKGVGLLHTTCGTPNYVAPE) are activation loop. The NAF domain occupies 310–336 (NDGGPLVMNAFEMITLSQGLDLSALFD). Residues 343–372 (KRQTRFVSRKPAKTIVATIEVVAETMGLKV) are PPI.

It belongs to the protein kinase superfamily. CAMK Ser/Thr protein kinase family. SNF1 subfamily. Interacts with CBL4. It depends on Mn(2+) as a cofactor.

The enzyme catalyses L-seryl-[protein] + ATP = O-phospho-L-seryl-[protein] + ADP + H(+). It carries out the reaction L-threonyl-[protein] + ATP = O-phospho-L-threonyl-[protein] + ADP + H(+). Its function is as follows. Involved in the regulatory pathway for the control of intracellular Na(+) and K(+) homeostasis and salt tolerance. Operates in synergy with CBL4 to activate the plasma membrane Na(+)/H(+) antiporter SOS1. CIPK serine-threonine protein kinases interact with CBL proteins. Binding of a CBL protein to the regulatory NAF domain of CIPK protein lead to the activation of the kinase in a calcium-dependent manner. The chain is CBL-interacting protein kinase 24 (CIPK24) from Oryza sativa subsp. japonica (Rice).